The sequence spans 262 residues: Probable DNA polymerase sliding clamp 1 (262 aa).

A DNA-binding region spans residues 67 to 86; it reads KCEHTYELGVNVLNMFKLLR.

This sequence belongs to the PCNA family.

Functionally, sliding clamp subunit. Responsible for tethering the catalytic subunit of DNA polymerase to DNA during high-speed replication. The sequence is that of Probable DNA polymerase sliding clamp 1 from Chlorella (PBCV-1).